The chain runs to 105 residues: Fungal protease inhibitor-1 (105 aa).

Positions 1 to 19 (MKAVITLLFLACILVVTYG) are cleaved as a signal peptide. 6 disulfides stabilise this stretch: Cys23-Cys56, Cys28-Cys58, Cys33-Cys59, Cys42-Cys62, Cys72-Cys93, and Cys87-Cys98.

Functionally, inhibits proteases from the fungi A.oryzae and R.oryzae, trypsin and chymotrypsin. Does not inhibit protease from the bacterium B.licheniformis or papain. The chain is Fungal protease inhibitor-1 from Antheraea mylitta (Tasar silkworm).